A 544-amino-acid chain; its full sequence is Ceramide glucosyltransferase (544 aa).

The Lumenal portion of the chain corresponds to 1–15 (MVQEELSLFRITTGY). Residues 16 to 36 (FFLLWYIIILVAAYSGFFEIL) form a helical membrane-spanning segment. The Cytoplasmic segment spans residues 37–427 (FNFRNRPILH…LATLIEPTTE (391 aa)). Position 109 (D109) is a short sequence motif, D1. A short sequence motif (D2) is located at residue D171. Residue D364 is a short sequence motif, D3. D364 serves as the catalytic Proton acceptor. The (Q/R)XXRW signature appears at 404 to 408 (RRVRW). Residues 428–448 (SIICGIYGTYAISTVFFGTWF) form a helical membrane-spanning segment. Residues 449-451 (NKY) lie on the Lumenal side of the membrane. Residues 452-472 (WFVMHMLIWMLTDYVQYHTLI) traverse the membrane as a helical segment. At 473–501 (NHTLDVKNITYLPNWLNESIPPKQRNCLQ) the chain is on the cytoplasmic side. Residues 502-522 (WGYIWILRELLALPIWIIAMI) traverse the membrane as a helical segment. Residues 523 to 544 (GHEIDWRGRPFRIKKDLTAEEM) lie on the Lumenal side of the membrane.

This sequence belongs to the glycosyltransferase 2 family.

The protein localises to the golgi apparatus membrane. The enzyme catalyses an N-acylsphing-4-enine + UDP-alpha-D-glucose = a beta-D-glucosyl-(1&lt;-&gt;1')-N-acylsphing-4-enine + UDP + H(+). It functions in the pathway lipid metabolism; sphingolipid metabolism. Functionally, catalyzes the final step in the biosynthesis of the membrane lipid glucosylceramide (GluCer), the transfer of glucose to ceramide. Glucosylceramides play important roles in growth, differentiation and pathogenicity. The chain is Ceramide glucosyltransferase from Candida albicans (strain SC5314 / ATCC MYA-2876) (Yeast).